Consider the following 58-residue polypeptide: U8-ctenitoxin-Pk1a (58 aa).

Intrachain disulfides connect C2–C16, C9–C22, C15–C40, C24–C38, and C48–C55.

As to expression, expressed by the venom gland.

The protein resides in the secreted. Functionally, no toxic effects on mice at dose levels of 5 ug per mouse. May be toxic to insects. The sequence is that of U8-ctenitoxin-Pk1a from Phoneutria keyserlingi (Brazilian wandering spider).